We begin with the raw amino-acid sequence, 286 residues long: Prepilin leader peptidase/N-methyltransferase (286 aa).

A helical membrane pass occupies residues 10–30; it reads FAVPLAAVLGLLVGSFLNVVI. Zn(2+) is bound by residues Cys-70, Cys-73, Cys-95, and Cys-98. The next 6 helical transmembrane spans lie at 102 to 122, 126 to 146, 157 to 177, 181 to 201, 224 to 244, and 250 to 270; these read ISIRYPLIELLTGVLFGLVAW, WSWITLGGLILTAFLISLTFI, MTLPLIWLGLIFNLDGGFVPL, VLGAVAGYSSLWLLCAVYKLL, ISALPVLIFVSSLIGLVAAIV, and GRHFAFGPALTVSGWIIFTAN.

It belongs to the peptidase A24 family. Zn(2+) serves as cofactor.

The protein resides in the cell inner membrane. The enzyme catalyses Typically cleaves a -Gly-|-Phe- bond to release an N-terminal, basic peptide of 5-8 residues from type IV prepilin, and then N-methylates the new N-terminal amino group, the methyl donor being S-adenosyl-L-methionine.. Plays an essential role in type IV pili and type II pseudopili formation by proteolytically removing the leader sequence from substrate proteins and subsequently monomethylating the alpha-amino group of the newly exposed N-terminal phenylalanine. This is Prepilin leader peptidase/N-methyltransferase (pilD) from Neisseria gonorrhoeae.